The primary structure comprises 445 residues: Argininosuccinate synthase (445 aa).

Residues 17–25 (AFSGGLDTS) and Ala43 each bind ATP. Tyr99 contacts L-citrulline. Residues Gly129 and Thr131 each contribute to the ATP site. Residues Thr131, Asn135, and Asp136 each contribute to the L-aspartate site. Asn135 lines the L-citrulline pocket. Asp136 provides a ligand contact to ATP. Arg139 and Ser192 together coordinate L-citrulline. Asp194 lines the ATP pocket. L-citrulline contacts are provided by Thr201, Glu203, and Glu280.

It belongs to the argininosuccinate synthase family. Type 2 subfamily. Homotetramer.

The protein resides in the cytoplasm. The enzyme catalyses L-citrulline + L-aspartate + ATP = 2-(N(omega)-L-arginino)succinate + AMP + diphosphate + H(+). The protein operates within amino-acid biosynthesis; L-arginine biosynthesis; L-arginine from L-ornithine and carbamoyl phosphate: step 2/3. This chain is Argininosuccinate synthase, found in Rhodopseudomonas palustris (strain BisB18).